Reading from the N-terminus, the 366-residue chain is Ribosomal RNA large subunit methyltransferase M (366 aa).

S-adenosyl-L-methionine contacts are provided by residues Ser-188, 221–224, Asp-240, Asp-260, and Asp-277; that span reads CPGG. The active-site Proton acceptor is Lys-306.

The protein belongs to the class I-like SAM-binding methyltransferase superfamily. RNA methyltransferase RlmE family. RlmM subfamily. As to quaternary structure, monomer.

It is found in the cytoplasm. It carries out the reaction cytidine(2498) in 23S rRNA + S-adenosyl-L-methionine = 2'-O-methylcytidine(2498) in 23S rRNA + S-adenosyl-L-homocysteine + H(+). Its function is as follows. Catalyzes the 2'-O-methylation at nucleotide C2498 in 23S rRNA. This Shigella dysenteriae serotype 1 (strain Sd197) protein is Ribosomal RNA large subunit methyltransferase M.